A 528-amino-acid chain; its full sequence is GMP synthase [glutamine-hydrolyzing] (528 aa).

In terms of domain architecture, Glutamine amidotransferase type-1 spans 13–204 (AIVILDFGSQ…VYHVCGCDPD (192 aa)). Residue Cys-90 is the Nucleophile of the active site. Residues His-178 and Glu-180 contribute to the active site. One can recognise a GMPS ATP-PPase domain in the interval 205–403 (WTTAAFIDEA…LGLPEEIVRR (199 aa)). ATP is bound at residue 232–238 (SGGVDSS).

In terms of assembly, homodimer.

It carries out the reaction XMP + L-glutamine + ATP + H2O = GMP + L-glutamate + AMP + diphosphate + 2 H(+). It participates in purine metabolism; GMP biosynthesis; GMP from XMP (L-Gln route): step 1/1. In terms of biological role, catalyzes the synthesis of GMP from XMP. This chain is GMP synthase [glutamine-hydrolyzing], found in Synechococcus sp. (strain CC9605).